The following is a 151-amino-acid chain: Viral interleukin-17 (151 aa).

Residues methionine 1–serine 22 form the signal peptide. N-linked (GlcNAc...) asparagine; by host glycosylation is found at asparagine 36, asparagine 53, and asparagine 64. Cystine bridges form between cysteine 90–cysteine 140 and cysteine 95–cysteine 142.

Belongs to the IL-17 family.

The protein resides in the secreted. This chain is Viral interleukin-17 (13), found in Saimiri sciureus (Common squirrel monkey).